Consider the following 416-residue polypeptide: Glutamyl-tRNA reductase (416 aa).

Substrate-binding positions include 49 to 52 (TCNR), serine 105, 110 to 112 (EPQ), and glutamine 116. The active-site Nucleophile is the cysteine 50. 185–190 (GAGETI) is a binding site for NADP(+).

The protein belongs to the glutamyl-tRNA reductase family. In terms of assembly, homodimer.

The catalysed reaction is (S)-4-amino-5-oxopentanoate + tRNA(Glu) + NADP(+) = L-glutamyl-tRNA(Glu) + NADPH + H(+). It functions in the pathway porphyrin-containing compound metabolism; protoporphyrin-IX biosynthesis; 5-aminolevulinate from L-glutamyl-tRNA(Glu): step 1/2. Catalyzes the NADPH-dependent reduction of glutamyl-tRNA(Glu) to glutamate 1-semialdehyde (GSA). The protein is Glutamyl-tRNA reductase of Shewanella piezotolerans (strain WP3 / JCM 13877).